Reading from the N-terminus, the 492-residue chain is Catalase (492 aa).

Residues H65 and N138 contribute to the active site. Residue Y348 participates in heme binding.

Belongs to the catalase family. As to quaternary structure, homotetramer. It depends on heme as a cofactor.

It is found in the cytoplasm. The protein resides in the cytosol. The protein localises to the peroxisome matrix. It catalyses the reaction 2 H2O2 = O2 + 2 H2O. In terms of biological role, catalyzes the degradation of hydrogen peroxide (H(2)O(2)) generated by peroxisomal oxidases to water and oxygen, thereby protecting cells from the toxic effects of hydrogen peroxide. The sequence is that of Catalase from Ipomoea batatas (Sweet potato).